The sequence spans 124 residues: Protein MGF 110-5L (124 aa).

An N-terminal signal peptide occupies residues Met1–Arg28.

Belongs to the asfivirus MGF 110 family.

Plays a role in virus cell tropism, and may be required for efficient virus replication in macrophages. The chain is Protein MGF 110-5L from Ornithodoros (relapsing fever ticks).